A 214-amino-acid polypeptide reads, in one-letter code: Chaperone protein TorD (214 aa).

It belongs to the TorD/DmsD family. TorD subfamily.

Its subcellular location is the cytoplasm. In terms of biological role, involved in the biogenesis of TorA. Acts on TorA before the insertion of the molybdenum cofactor and, as a result, probably favors a conformation of the apoenzyme that is competent for acquiring the cofactor. The sequence is that of Chaperone protein TorD from Aeromonas salmonicida (strain A449).